The sequence spans 109 residues: Cytochrome c-550 (109 aa).

Residues Cys-13, Cys-16, His-17, and Met-79 each contribute to the heme c site.

In terms of processing, binds 1 heme c group covalently per subunit.

In Nitrobacter winogradskyi (Nitrobacter agilis), this protein is Cytochrome c-550.